Here is a 164-residue protein sequence, read N- to C-terminus: Outer membrane protein assembly factor BamE (164 aa).

Positions 1 to 19 are cleaved as a signal peptide; sequence MHAFFPRLLLLLLFLPLTH. The tract at residues 111–164 is disordered; the sequence is PAFSESEPAQNFFSPEQTFTPAPDTDSNMNEEPDKKGTVNFLKENQTNFYKDNQ. Polar residues-rich tracts occupy residues 117–140 and 153–164; these read EPAQ…SNMN and KENQTNFYKDNQ.

It belongs to the BamE family. Part of the Bam complex.

It localises to the cell outer membrane. Its function is as follows. Part of the outer membrane protein assembly complex, which is involved in assembly and insertion of beta-barrel proteins into the outer membrane. In Nitrosomonas europaea (strain ATCC 19718 / CIP 103999 / KCTC 2705 / NBRC 14298), this protein is Outer membrane protein assembly factor BamE.